The chain runs to 171 residues: Protein TIFY 11d (171 aa).

One can recognise a Tify domain in the interval 65-100 (PSAGTAPLTIFYDGRMVVVDDVPAEKAAELMRLAGS). The short motif at 117-142 (PIARKASLQRFLQKRKHRITTTSEPY) is the Jas element. A Nuclear localization signal motif is present at residues 119–126 (ARKASLQR).

This sequence belongs to the TIFY/JAZ family. Interacts with BHLH148 and COI1A. Interacts with COI1A, COI1B and COI2 in a coronatine-dependent manner. Coronatine is an analog of jasmonoyl isoleucine (JA-Ile). Ubiquitinated. Increase in jasmonoyl isoleucine (JA-Ile) levels mediates its degradation via COI1A-mediated proteasome pathway.

Its subcellular location is the nucleus. Its function is as follows. Repressor of jasmonate (JA) responses. May act on an initial response of JA-regulated gene expression toward drought tolerance as part of a BHLH148-TIFY11D/JAZ12-COI1A complex. In Oryza sativa subsp. indica (Rice), this protein is Protein TIFY 11d.